The chain runs to 208 residues: PITH domain-containing protein ZK353.9 (208 aa).

The PITH domain occupies glutamate 17–arginine 189.

This sequence belongs to the PITHD1 family.

The chain is PITH domain-containing protein ZK353.9 from Caenorhabditis elegans.